A 515-amino-acid chain; its full sequence is ATP synthase subunit alpha (515 aa).

169–176 (GDRQTGKT) contributes to the ATP binding site.

Belongs to the ATPase alpha/beta chains family. As to quaternary structure, F-type ATPases have 2 components, CF(1) - the catalytic core - and CF(0) - the membrane proton channel. CF(1) has five subunits: alpha(3), beta(3), gamma(1), delta(1), epsilon(1). CF(0) has three main subunits: a(1), b(2) and c(9-12). The alpha and beta chains form an alternating ring which encloses part of the gamma chain. CF(1) is attached to CF(0) by a central stalk formed by the gamma and epsilon chains, while a peripheral stalk is formed by the delta and b chains.

It localises to the cell inner membrane. The enzyme catalyses ATP + H2O + 4 H(+)(in) = ADP + phosphate + 5 H(+)(out). Produces ATP from ADP in the presence of a proton gradient across the membrane. The alpha chain is a regulatory subunit. The polypeptide is ATP synthase subunit alpha (Neisseria meningitidis serogroup C / serotype 2a (strain ATCC 700532 / DSM 15464 / FAM18)).